The following is a 277-amino-acid chain: Thymidylate synthase (277 aa).

Residue arginine 21 coordinates dUMP. Histidine 51 lines the (6R)-5,10-methylene-5,6,7,8-tetrahydrofolate pocket. Arginine 126–arginine 127 contacts dUMP. Residue cysteine 159 is the Nucleophile of the active site. DUMP is bound by residues arginine 179–aspartate 182, asparagine 190, and histidine 220–tyrosine 222. A (6R)-5,10-methylene-5,6,7,8-tetrahydrofolate-binding site is contributed by aspartate 182. Residue serine 276 participates in (6R)-5,10-methylene-5,6,7,8-tetrahydrofolate binding.

This sequence belongs to the thymidylate synthase family. Bacterial-type ThyA subfamily. Homodimer.

The protein resides in the cytoplasm. The enzyme catalyses dUMP + (6R)-5,10-methylene-5,6,7,8-tetrahydrofolate = 7,8-dihydrofolate + dTMP. It participates in pyrimidine metabolism; dTTP biosynthesis. In terms of biological role, catalyzes the reductive methylation of 2'-deoxyuridine-5'-monophosphate (dUMP) to 2'-deoxythymidine-5'-monophosphate (dTMP) while utilizing 5,10-methylenetetrahydrofolate (mTHF) as the methyl donor and reductant in the reaction, yielding dihydrofolate (DHF) as a by-product. This enzymatic reaction provides an intracellular de novo source of dTMP, an essential precursor for DNA biosynthesis. The protein is Thymidylate synthase of Hydrogenovibrio crunogenus (strain DSM 25203 / XCL-2) (Thiomicrospira crunogena).